Here is a 322-residue protein sequence, read N- to C-terminus: HPr kinase/phosphorylase (322 aa).

Catalysis depends on residues His153 and Lys174. 168 to 175 lines the ATP pocket; sequence GRSGLGKS. Ser175 lines the Mg(2+) pocket. The Proton acceptor; for phosphorylation activity. Proton donor; for dephosphorylation activity role is filled by Asp192. Positions 217 to 226 are important for the catalytic mechanism of both phosphorylation and dephosphorylation; that stretch reads MEIRGLGVVD. Glu218 is a Mg(2+) binding site. Arg259 is an active-site residue. The tract at residues 280 to 285 is important for the catalytic mechanism of dephosphorylation; it reads PIFPGK.

It belongs to the HPrK/P family. In terms of assembly, homohexamer. Mg(2+) serves as cofactor.

The enzyme catalyses [HPr protein]-L-serine + ATP = [HPr protein]-O-phospho-L-serine + ADP + H(+). It carries out the reaction [HPr protein]-O-phospho-L-serine + phosphate + H(+) = [HPr protein]-L-serine + diphosphate. Functionally, catalyzes the ATP- as well as the pyrophosphate-dependent phosphorylation of a specific serine residue in HPr, a phosphocarrier protein of the phosphoenolpyruvate-dependent sugar phosphotransferase system (PTS). HprK/P also catalyzes the pyrophosphate-producing, inorganic phosphate-dependent dephosphorylation (phosphorolysis) of seryl-phosphorylated HPr (P-Ser-HPr). The protein is HPr kinase/phosphorylase of Chlorobium phaeobacteroides (strain DSM 266 / SMG 266 / 2430).